A 320-amino-acid polypeptide reads, in one-letter code: Acetyl-coenzyme A carboxylase carboxyl transferase subunit beta (320 aa).

In terms of domain architecture, CoA carboxyltransferase N-terminal spans 25–294 (LWRKCPECGT…AIVGDLPAPD (270 aa)). Residues Cys29, Cys32, Cys48, and Cys51 each contribute to the Zn(2+) site. A C4-type zinc finger spans residues 29–51 (CPECGTMLFHRELSDNLFVCISC). A disordered region spans residues 290-320 (LPAPDPAPATPEPQKAAPSAPAQDKPGAGRS).

This sequence belongs to the AccD/PCCB family. In terms of assembly, acetyl-CoA carboxylase is a heterohexamer composed of biotin carboxyl carrier protein (AccB), biotin carboxylase (AccC) and two subunits each of ACCase subunit alpha (AccA) and ACCase subunit beta (AccD). It depends on Zn(2+) as a cofactor.

It is found in the cytoplasm. It carries out the reaction N(6)-carboxybiotinyl-L-lysyl-[protein] + acetyl-CoA = N(6)-biotinyl-L-lysyl-[protein] + malonyl-CoA. It functions in the pathway lipid metabolism; malonyl-CoA biosynthesis; malonyl-CoA from acetyl-CoA: step 1/1. Component of the acetyl coenzyme A carboxylase (ACC) complex. Biotin carboxylase (BC) catalyzes the carboxylation of biotin on its carrier protein (BCCP) and then the CO(2) group is transferred by the transcarboxylase to acetyl-CoA to form malonyl-CoA. This Dinoroseobacter shibae (strain DSM 16493 / NCIMB 14021 / DFL 12) protein is Acetyl-coenzyme A carboxylase carboxyl transferase subunit beta.